Here is a 257-residue protein sequence, read N- to C-terminus: Indole-3-glycerol phosphate synthase (257 aa).

It belongs to the TrpC family.

The catalysed reaction is 1-(2-carboxyphenylamino)-1-deoxy-D-ribulose 5-phosphate + H(+) = (1S,2R)-1-C-(indol-3-yl)glycerol 3-phosphate + CO2 + H2O. The protein operates within amino-acid biosynthesis; L-tryptophan biosynthesis; L-tryptophan from chorismate: step 4/5. This is Indole-3-glycerol phosphate synthase from Halalkalibacterium halodurans (strain ATCC BAA-125 / DSM 18197 / FERM 7344 / JCM 9153 / C-125) (Bacillus halodurans).